The primary structure comprises 446 residues: Baeyer-Villiger monooxygenase dmxR6 (446 aa).

The protein belongs to the AflY oxidoreductase family.

Its pathway is secondary metabolite biosynthesis. Functionally, baeyer-Villiger monooxygenase; part of the gene cluster that mediates the biosynthesis of the dimeric xanthones cryptosporioptides. The pathway begins with the synthesis of atrochrysone thioester by the polyketide synthase dmx-nrPKS. The atrochrysone carboxyl ACP thioesterase dmxR1 then breaks the thioester bond and releases the atrochrysone carboxylic acid from dmx-nrPKS. Atrochrysone carboxylic acid is decarboxylated by the decarboxylase dmxR15, and oxidized by the anthrone oxygenase dmxR16 to yield emodin. Emodin is then reduced to emodin hydroquinone by the oxidoreductase dmxR7. A-ring reduction by the short chain dehydrogenase dmxR18, dehydration by the scytalone dehydratase-like protein dmxR17 and probable spontaneous re-oxidation, results in overall deoxygenation to chrysophanol. Baeyer-Villiger oxidation by the Baeyer-Villiger monooxygenase (BVMO) dmxR6 then yields monodictylactone in equilibrium with monodictyphenone. In the case of the cryptosporioptides biosynthesis, monodictylactone is reduced at C-12 to an alcohol (by the short chain dehydrogenases dmxR12 or dmxR8) and hydroxylated at C-5 by dmxR9, yielding the electron-rich aromatic which could eliminate H(2)O to form the ortho-quinonemethide, followed by tautomerisation to paraquinone and complete the formal reduction to produce the 10-methylgroup. Conjugate addition of C-4a-OH to the resulting paraquinone by the monooxygenase dmxR10 then gives cyclohexadienone, which is then reduced at C-5 by the short chain dehydrogenase dmxR3 to give the dihydroxanthone. The 6,7-epoxide in the cryptosporioptides could be introduced by the cytochrome P450 monooxygenase dmxL3. The highly reducing PKS dmxL2 manufactures butyrate, which is further carboxylated by dmxL1 to form ethylmalonate. It is not yet clear whether the carboxylation occurs while the butyrate is attached to the ACP of dmxL2, but this unusual fungal metabolite could then be esterified to O-5 by the O-acetyltransferase dmxR13. Finally, dimerization performed by dmxR5 gives the observed dimers cryptosporioptides A, B and C as the final products of the pathway. The chain is Baeyer-Villiger monooxygenase dmxR6 from Cryptosporiopsis sp. (strain 8999).